A 364-amino-acid chain; its full sequence is Polygalacturonase (364 aa).

A signal peptide spans 1-21 (MVAYALTSMLLSAGALVAAAP). Residues 22 to 27 (SGLDAR) constitute a propeptide that is removed on maturation. Residues Cys-30 and Cys-45 are joined by a disulfide bond. PbH1 repeat units follow at residues 158–188 (VTGL…DIGS), 189–210 (SSGI…AINS), 211–231 (GSDI…SIGS), 240–261 (VKGV…RIKT), 269–291 (VSDI…VIEQ), and 303–348 (TTGV…SITG). Asp-203 serves as the catalytic Proton donor. Cys-205 and Cys-221 form a disulfide bridge. His-225 is an active-site residue. A glycan (N-linked (GlcNAc...) asparagine) is linked at Asn-276. Cys-331 and Cys-336 are joined by a disulfide. Asn-340 is a glycosylation site (N-linked (GlcNAc...) asparagine). Cys-355 and Cys-364 are joined by a disulfide.

The protein belongs to the glycosyl hydrolase 28 family.

It is found in the secreted. The enzyme catalyses (1,4-alpha-D-galacturonosyl)n+m + H2O = (1,4-alpha-D-galacturonosyl)n + (1,4-alpha-D-galacturonosyl)m.. Functionally, involved in maceration and soft-rotting of plant tissue. Hydrolyzes the 1,4-alpha glycosidic bonds of de-esterified pectate in the smooth region of the plant cell wall. This is Polygalacturonase (PGN1) from Cochliobolus carbonum (Maize leaf spot fungus).